A 238-amino-acid polypeptide reads, in one-letter code: MNHKLPQHIAVVMDGNGRWAESRGLPRVEGHKAGLDSVKKIINCCLEKKISCLSLFAFSSENWSRPVTEVNFLMELFLEALRKEIDDLNQHGIRLKFTGDREPLSQILQKQMCDAEALTKNNQQLILNVVVNYGGKWDIVTAARKLIRTVLDGKLAYDEINEAVFAQFLDTNGMPEPDLFIRTSGELRISNFFLWQLAYTELYFTDVHWPDFNEHEFELALISFAKRARRFGQISQSE.

Asp-14 is a catalytic residue. Mg(2+) is bound at residue Asp-14. Substrate contacts are provided by residues 15–18 (GNGR), Trp-19, Arg-27, His-31, and 59–61 (SSE). The active-site Proton acceptor is Asn-62. Substrate contacts are provided by residues Trp-63, Arg-65, Arg-182, and 188–190 (RIS). Glu-201 serves as a coordination point for Mg(2+).

The protein belongs to the UPP synthase family. In terms of assembly, homodimer. Requires Mg(2+) as cofactor.

The enzyme catalyses 8 isopentenyl diphosphate + (2E,6E)-farnesyl diphosphate = di-trans,octa-cis-undecaprenyl diphosphate + 8 diphosphate. In terms of biological role, catalyzes the sequential condensation of isopentenyl diphosphate (IPP) with (2E,6E)-farnesyl diphosphate (E,E-FPP) to yield (2Z,6Z,10Z,14Z,18Z,22Z,26Z,30Z,34E,38E)-undecaprenyl diphosphate (di-trans,octa-cis-UPP). UPP is the precursor of glycosyl carrier lipid in the biosynthesis of bacterial cell wall polysaccharide components such as peptidoglycan and lipopolysaccharide. The protein is Ditrans,polycis-undecaprenyl-diphosphate synthase ((2E,6E)-farnesyl-diphosphate specific) of Legionella pneumophila subsp. pneumophila (strain Philadelphia 1 / ATCC 33152 / DSM 7513).